Reading from the N-terminus, the 195-residue chain is Probable GTP-binding protein EngB (195 aa).

In terms of domain architecture, EngB-type G spans 22–195 (GLPEIALAGR…WGAIKKMISR (174 aa)). Residues 30–37 (GRSNVGKS), 57–61 (GKTQT), 75–78 (DVPG), 142–145 (TKAD), and 174–176 (FSS) contribute to the GTP site. Mg(2+) is bound by residues S37 and T59.

This sequence belongs to the TRAFAC class TrmE-Era-EngA-EngB-Septin-like GTPase superfamily. EngB GTPase family. Mg(2+) serves as cofactor.

Its function is as follows. Necessary for normal cell division and for the maintenance of normal septation. The chain is Probable GTP-binding protein EngB from Bacillus velezensis (strain DSM 23117 / BGSC 10A6 / LMG 26770 / FZB42) (Bacillus amyloliquefaciens subsp. plantarum).